The chain runs to 306 residues: Homoserine O-acetyltransferase (306 aa).

Residue Cys-142 is the Acyl-thioester intermediate of the active site. Substrate contacts are provided by Lys-163 and Ser-192. The Proton acceptor role is filled by His-235. Residue Glu-237 is part of the active site. Residue Arg-249 participates in substrate binding.

Belongs to the MetA family.

The protein resides in the cytoplasm. It carries out the reaction L-homoserine + acetyl-CoA = O-acetyl-L-homoserine + CoA. It participates in amino-acid biosynthesis; L-methionine biosynthesis via de novo pathway; O-acetyl-L-homoserine from L-homoserine: step 1/1. Its function is as follows. Transfers an acetyl group from acetyl-CoA to L-homoserine, forming acetyl-L-homoserine. The chain is Homoserine O-acetyltransferase from Clostridium botulinum (strain Eklund 17B / Type B).